The chain runs to 338 residues: tRNA N6-adenosine threonylcarbamoyltransferase (338 aa).

Residues His111 and His115 each contribute to the Fe cation site. Residues 133–137 (LVSGG), Asp166, Gly179, Asp183, and Asn275 contribute to the substrate site. Asp300 is a binding site for Fe cation.

This sequence belongs to the KAE1 / TsaD family. Fe(2+) is required as a cofactor.

Its subcellular location is the cytoplasm. It carries out the reaction L-threonylcarbamoyladenylate + adenosine(37) in tRNA = N(6)-L-threonylcarbamoyladenosine(37) in tRNA + AMP + H(+). Required for the formation of a threonylcarbamoyl group on adenosine at position 37 (t(6)A37) in tRNAs that read codons beginning with adenine. Is involved in the transfer of the threonylcarbamoyl moiety of threonylcarbamoyl-AMP (TC-AMP) to the N6 group of A37, together with TsaE and TsaB. TsaD likely plays a direct catalytic role in this reaction. The protein is tRNA N6-adenosine threonylcarbamoyltransferase of Treponema denticola (strain ATCC 35405 / DSM 14222 / CIP 103919 / JCM 8153 / KCTC 15104).